We begin with the raw amino-acid sequence, 629 residues long: Serine/threonine-protein kinase ICK (629 aa).

In terms of domain architecture, Protein kinase spans 4–284 (YTTIKQLGDG…ASQALRYPYF (281 aa)). ATP contacts are provided by residues 10-18 (LGDGTYGSV) and Lys33. The active-site Proton acceptor is Asp125. Thr157 carries the post-translational modification Phosphothreonine; by CDK7. Tyr159 is modified (phosphotyrosine). Ser161 is subject to Phosphoserine. Disordered regions lie at residues 292-376 (IISK…SLHN), 455-483 (SESV…SSAK), and 581-629 (SSLK…PSRR). A compositionally biased stretch (basic and acidic residues) spans 296-306 (DSGKPQREVQD). A compositionally biased stretch (pro residues) spans 309 to 321 (GPPPYIKPAPPAQ). Composition is skewed to low complexity over residues 322 to 344 (APAK…PQHS) and 457 to 470 (SVGT…QASS).

It belongs to the protein kinase superfamily. CMGC Ser/Thr protein kinase family. CDC2/CDKX subfamily. Requires Mg(2+) as cofactor. In terms of processing, autophosphorylated on serine and threonine residues. Phosphorylation at Thr-157 by CDK7/Cak1p increases kinase activity. In terms of tissue distribution, highly expressed in colon and lung, lower levels present in heart, esophagus, stomach, small intestine and ovary. Localizes to the crypt region of large and small intestine.

It localises to the cytoplasm. The protein resides in the cytosol. It is found in the cell projection. Its subcellular location is the cilium. The protein localises to the nucleus. It localises to the cytoskeleton. The protein resides in the cilium basal body. The catalysed reaction is L-seryl-[protein] + ATP = O-phospho-L-seryl-[protein] + ADP + H(+). It carries out the reaction L-threonyl-[protein] + ATP = O-phospho-L-threonyl-[protein] + ADP + H(+). In terms of biological role, has an essential role in ciliogenesis, particularly in neuronal and retinal progenitor cells. Phosphorylates KIF3A. Involved in the control of ciliary length. Regulates the ciliary localization of SHH pathway components as well as the localization of IFT components at ciliary tips. May play a role in cardiac development. Regulates intraflagellar transport (IFT) speed and negatively regulates cilium length in a cAMP and mTORC1 signaling -dependent manner and this regulation requires its kinase activity. This is Serine/threonine-protein kinase ICK (Cilk1) from Mus musculus (Mouse).